The chain runs to 305 residues: Acetyl-coenzyme A carboxylase carboxyl transferase subunit beta (305 aa).

One can recognise a CoA carboxyltransferase N-terminal domain in the interval 25–294; that stretch reads VWTKCDSCGQ…PGNDDVEIRS (270 aa). Cys29, Cys32, Cys48, and Cys51 together coordinate Zn(2+). The segment at 29–51 adopts a C4-type zinc-finger fold; it reads CDSCGQVLYRAELERNLGVCPKC. The disordered stretch occupies residues 281 to 305; it reads NHPEPGNDDVEIRSDAPSESSQDDA.

Belongs to the AccD/PCCB family. Acetyl-CoA carboxylase is a heterohexamer composed of biotin carboxyl carrier protein (AccB), biotin carboxylase (AccC) and two subunits each of ACCase subunit alpha (AccA) and ACCase subunit beta (AccD). Zn(2+) serves as cofactor.

It localises to the cytoplasm. The catalysed reaction is N(6)-carboxybiotinyl-L-lysyl-[protein] + acetyl-CoA = N(6)-biotinyl-L-lysyl-[protein] + malonyl-CoA. Its pathway is lipid metabolism; malonyl-CoA biosynthesis; malonyl-CoA from acetyl-CoA: step 1/1. In terms of biological role, component of the acetyl coenzyme A carboxylase (ACC) complex. Biotin carboxylase (BC) catalyzes the carboxylation of biotin on its carrier protein (BCCP) and then the CO(2) group is transferred by the transcarboxylase to acetyl-CoA to form malonyl-CoA. The sequence is that of Acetyl-coenzyme A carboxylase carboxyl transferase subunit beta from Pectobacterium atrosepticum (strain SCRI 1043 / ATCC BAA-672) (Erwinia carotovora subsp. atroseptica).